Reading from the N-terminus, the 98-residue chain is NADH-ubiquinone oxidoreductase chain 4L (98 aa).

3 consecutive transmembrane segments (helical) span residues 1-21, 29-49, and 58-78; these read MPII…GMLI, SLLC…LMAL, and IVPI…LALL.

The protein belongs to the complex I subunit 4L family. As to quaternary structure, core subunit of respiratory chain NADH dehydrogenase (Complex I) which is composed of 45 different subunits.

It is found in the mitochondrion inner membrane. The catalysed reaction is a ubiquinone + NADH + 5 H(+)(in) = a ubiquinol + NAD(+) + 4 H(+)(out). Core subunit of the mitochondrial membrane respiratory chain NADH dehydrogenase (Complex I) which catalyzes electron transfer from NADH through the respiratory chain, using ubiquinone as an electron acceptor. Part of the enzyme membrane arm which is embedded in the lipid bilayer and involved in proton translocation. This is NADH-ubiquinone oxidoreductase chain 4L (MT-ND4L) from Nasalis larvatus (Proboscis monkey).